The chain runs to 474 residues: Cobyric acid synthase (474 aa).

Residues 251-431 (TGFVAIPRLP…LHGLLENSAY (181 aa)) enclose the GATase cobBQ-type domain. Residue cysteine 328 is the Nucleophile of the active site. Histidine 423 is a catalytic residue.

It belongs to the CobB/CobQ family. CobQ subfamily.

Its pathway is cofactor biosynthesis; adenosylcobalamin biosynthesis. Its function is as follows. Catalyzes amidations at positions B, D, E, and G on adenosylcobyrinic A,C-diamide. NH(2) groups are provided by glutamine, and one molecule of ATP is hydrogenolyzed for each amidation. This Deinococcus radiodurans (strain ATCC 13939 / DSM 20539 / JCM 16871 / CCUG 27074 / LMG 4051 / NBRC 15346 / NCIMB 9279 / VKM B-1422 / R1) protein is Cobyric acid synthase.